The following is a 95-amino-acid chain: Aspartyl/glutamyl-tRNA(Asn/Gln) amidotransferase subunit C (95 aa).

It belongs to the GatC family. As to quaternary structure, heterotrimer of A, B and C subunits.

The catalysed reaction is L-glutamyl-tRNA(Gln) + L-glutamine + ATP + H2O = L-glutaminyl-tRNA(Gln) + L-glutamate + ADP + phosphate + H(+). It catalyses the reaction L-aspartyl-tRNA(Asn) + L-glutamine + ATP + H2O = L-asparaginyl-tRNA(Asn) + L-glutamate + ADP + phosphate + 2 H(+). Allows the formation of correctly charged Asn-tRNA(Asn) or Gln-tRNA(Gln) through the transamidation of misacylated Asp-tRNA(Asn) or Glu-tRNA(Gln) in organisms which lack either or both of asparaginyl-tRNA or glutaminyl-tRNA synthetases. The reaction takes place in the presence of glutamine and ATP through an activated phospho-Asp-tRNA(Asn) or phospho-Glu-tRNA(Gln). This chain is Aspartyl/glutamyl-tRNA(Asn/Gln) amidotransferase subunit C, found in Cereibacter sphaeroides (strain ATCC 17023 / DSM 158 / JCM 6121 / CCUG 31486 / LMG 2827 / NBRC 12203 / NCIMB 8253 / ATH 2.4.1.) (Rhodobacter sphaeroides).